The chain runs to 249 residues: Probable septum site-determining protein MinC (249 aa).

The segment at 116–149 is disordered; sequence AAVSPPPPPPPPPARAEPAAPVARPAPGRMQRNA. Residues 119–130 are compositionally biased toward pro residues; the sequence is SPPPPPPPPPAR. Residues 131–142 show a composition bias toward low complexity; sequence AEPAAPVARPAP.

Belongs to the MinC family. Interacts with MinD and FtsZ.

Its function is as follows. Cell division inhibitor that blocks the formation of polar Z ring septums. Rapidly oscillates between the poles of the cell to destabilize FtsZ filaments that have formed before they mature into polar Z rings. Prevents FtsZ polymerization. The sequence is that of Probable septum site-determining protein MinC from Xanthomonas campestris pv. campestris (strain B100).